Here is a 270-residue protein sequence, read N- to C-terminus: Regulatory protein RecX (270 aa).

This sequence belongs to the RecX family.

It localises to the cytoplasm. Modulates RecA activity. This is Regulatory protein RecX from Bacillus cereus (strain 03BB102).